The chain runs to 585 residues: Glutamate decarboxylase 2 (585 aa).

Positions 1–25 (MASPGSGFWSFGSEDGSGDPENPGT) are disordered. Phosphoserine occurs at positions 3, 6, 10, 13, and 17. 2 S-palmitoyl cysteine lipidation sites follow: cysteine 30 and cysteine 45. Residue 181 to 183 (QLS) participates in substrate binding. N6-(pyridoxal phosphate)lysine is present on lysine 396. Substrate is bound at residue arginine 558.

This sequence belongs to the group II decarboxylase family. As to quaternary structure, homodimer. Pyridoxal 5'-phosphate serves as cofactor. In terms of processing, the N-terminus is blocked. Phosphorylated; which does not affect kinetic parameters or subcellular location. Post-translationally, palmitoylated; which is required for presynaptic clustering.

The protein resides in the cytoplasm. It is found in the cytosol. It localises to the cytoplasmic vesicle. Its subcellular location is the presynaptic cell membrane. The protein localises to the golgi apparatus membrane. The catalysed reaction is L-glutamate + H(+) = 4-aminobutanoate + CO2. Functionally, catalyzes the production of GABA. The chain is Glutamate decarboxylase 2 (Gad2) from Rattus norvegicus (Rat).